The chain runs to 639 residues: E3 ubiquitin-protein ligase RNF12 (639 aa).

Disordered regions lie at residues 1–28, 67–403, and 467–534; these read MESADSAGKGSTEQSESQRQSQMDRLDR, RLQQ…ESER, and NDTD…GGVT. Residues 11-21 show a composition bias toward low complexity; it reads STEQSESQRQS. 2 stretches are compositionally biased toward polar residues: residues 110 to 138 and 147 to 166; these read SVRQTGNTTRSGQRGNQSWRAVSRTNPNS and INVNRTSGNPSMPSLEQSSE. The span at 213–228 shows a compositional bias: basic and acidic residues; the sequence is RSPDQRRTRARTDRSR. The segment covering 244–253 has biased composition (polar residues); sequence HSSSQTVDAS. Positions 269–286 are enriched in low complexity; the sequence is SSQMQNSSSSNETEGSSR. The segment covering 290 to 302 has biased composition (polar residues); the sequence is HITARQQALGTEG. 2 stretches are compositionally biased toward low complexity: residues 303 to 327 and 335 to 348; these read QSQSQTQTQSQSQTQTQSQTQSQST and SRSSSQPPQTDSSS. The segment covering 349 to 358 has biased composition (polar residues); the sequence is NAETTGTGQR. Basic and acidic residues predominate over residues 372–382; sequence RPGDYRQRDSI. Positions 383 to 399 are enriched in polar residues; that stretch reads ANRTRSRSQTPNNTVTY. Pro residues-rich tracts occupy residues 473–482 and 493–506; these read NPTPVSPPAA and PEPPAPIVEPPEPV. The RING-type; atypical zinc finger occupies 585–626; it reads CSVCITEYTEGNKLRKLPCSHEYHVHCIDRWLSENSTCPICR. The short motif at 636–639 is the PDZ-binding element; sequence ESIV.

The protein belongs to the RNF12 family. As to quaternary structure, forms homodimers through the C-terminal region. The N-terminus interacts with the homeobox of LIM/homeobox factor lhx1/lim1, with lhx3/lim3 and lhx5/lim5, and with the N-terminus of ldb1.

The protein localises to the nucleus. The enzyme catalyses S-ubiquitinyl-[E2 ubiquitin-conjugating enzyme]-L-cysteine + [acceptor protein]-L-lysine = [E2 ubiquitin-conjugating enzyme]-L-cysteine + N(6)-ubiquitinyl-[acceptor protein]-L-lysine.. Its pathway is protein modification; protein ubiquitination. In terms of biological role, acts as an E3 ubiquitin-protein ligase specific for ldb1, mediating ubiquitination and proteasome-dependent degradation of excess ldb1 in a RING-dependent manner. Does not degrade ldb1 bound to lhx1/lim1, nor lim1 itself and thus contributes to the establishment of proper ldb1-lhx1/lim1 stoichiometry and the formation of a ldb1-lhx1/lim1 complex. Interferes with Spemann organizer function and suppresses secondary axis formation induced by ldb1 and lhx1/lim1. The protein is E3 ubiquitin-protein ligase RNF12 of Xenopus tropicalis (Western clawed frog).